Reading from the N-terminus, the 303-residue chain is Putative S-adenosyl-L-methionine-dependent methyltransferase SCO6443 (303 aa).

S-adenosyl-L-methionine contacts are provided by residues aspartate 130 and 159–160; that span reads DL.

This sequence belongs to the UPF0677 family.

In terms of biological role, exhibits S-adenosyl-L-methionine-dependent methyltransferase activity. The sequence is that of Putative S-adenosyl-L-methionine-dependent methyltransferase SCO6443 from Streptomyces coelicolor (strain ATCC BAA-471 / A3(2) / M145).